The primary structure comprises 408 residues: tRNA-specific 2-thiouridylase MnmA (408 aa).

Residues 20 to 27 and Leu-46 contribute to the ATP site; that span reads AMSGGVDS. Residue Cys-114 is the Nucleophile of the active site. The cysteines at positions 114 and 210 are disulfide-linked. Gly-138 contacts ATP. Residues 160–162 form an interaction with tRNA region; that stretch reads RDQ. Residue Cys-210 is the Cysteine persulfide intermediate of the active site.

Belongs to the MnmA/TRMU family.

It is found in the cytoplasm. It catalyses the reaction S-sulfanyl-L-cysteinyl-[protein] + uridine(34) in tRNA + AH2 + ATP = 2-thiouridine(34) in tRNA + L-cysteinyl-[protein] + A + AMP + diphosphate + H(+). Catalyzes the 2-thiolation of uridine at the wobble position (U34) of tRNA, leading to the formation of s(2)U34. The chain is tRNA-specific 2-thiouridylase MnmA from Bartonella quintana (strain Toulouse) (Rochalimaea quintana).